The sequence spans 884 residues: DNA mismatch repair protein MutS (884 aa).

Position 651-658 (651-658 (GPNMSGKS)) interacts with ATP. Residues 843-884 (LRNQGKSQPAQKNCKKEPAPNRSPDPAVGDQLSLIPAPLFPD) are disordered.

This sequence belongs to the DNA mismatch repair MutS family.

In terms of biological role, this protein is involved in the repair of mismatches in DNA. It is possible that it carries out the mismatch recognition step. This protein has a weak ATPase activity. The sequence is that of DNA mismatch repair protein MutS from Synechococcus sp. (strain JA-2-3B'a(2-13)) (Cyanobacteria bacterium Yellowstone B-Prime).